A 465-amino-acid chain; its full sequence is 6-phospho-beta-glucosidase (465 aa).

The Proton donor role is filled by E173. E362 functions as the Nucleophile in the catalytic mechanism.

This sequence belongs to the glycosyl hydrolase 1 family.

It carries out the reaction 6-phospho-beta-D-glucosyl-(1-&gt;4)-D-glucose + H2O = D-glucose 6-phosphate + D-glucose. The protein operates within carbohydrate metabolism; beta-glucoside metabolism. This chain is 6-phospho-beta-glucosidase (arbB), found in Dickeya chrysanthemi (Pectobacterium chrysanthemi).